The chain runs to 412 residues: Peptidase T (412 aa).

His-84 serves as a coordination point for Zn(2+). Asp-86 is a catalytic residue. Zn(2+) is bound at residue Asp-146. Glu-179 acts as the Proton acceptor in catalysis. Residues Glu-180, Asp-202, and His-385 each coordinate Zn(2+).

Belongs to the peptidase M20B family. It depends on Zn(2+) as a cofactor.

The protein localises to the cytoplasm. It carries out the reaction Release of the N-terminal residue from a tripeptide.. Functionally, cleaves the N-terminal amino acid of tripeptides. This chain is Peptidase T, found in Haemophilus influenzae (strain ATCC 51907 / DSM 11121 / KW20 / Rd).